The following is a 230-amino-acid chain: Cytidylate kinase (230 aa).

Position 11–19 (11–19 (GQSAAGKST)) interacts with ATP.

It belongs to the cytidylate kinase family. Type 1 subfamily.

Its subcellular location is the cytoplasm. The enzyme catalyses CMP + ATP = CDP + ADP. The catalysed reaction is dCMP + ATP = dCDP + ADP. The protein is Cytidylate kinase of Chloroflexus aggregans (strain MD-66 / DSM 9485).